The chain runs to 228 residues: SPbeta prophage-derived uncharacterized protein YomL (228 aa).

Residues 1-28 (MRKKRVITCVMAASLTLGSLLPAGYATA) form the signal peptide.

This Bacillus subtilis (strain 168) protein is SPbeta prophage-derived uncharacterized protein YomL (yomL).